A 169-amino-acid polypeptide reads, in one-letter code: Putative ribonuclease VapC50 (169 aa).

Functionally, toxic component of a type II toxin-antitoxin (TA) system. An RNase. The cognate antitoxin is VapB50. The sequence is that of Putative ribonuclease VapC50 from Mycobacterium tuberculosis (strain ATCC 25618 / H37Rv).